The sequence spans 66 residues: Large ribosomal subunit protein bL35 (66 aa).

The segment covering 1–26 (MPKMKTHRGSAKRFKKTGSGKLKRSH) has biased composition (basic residues). Residues 1–48 (MPKMKTHRGSAKRFKKTGSGKLKRSHAYTSHLFANKSQKQKRKLRKSA) form a disordered region.

It belongs to the bacterial ribosomal protein bL35 family. As to quaternary structure, part of the 50S ribosomal subunit.

This is Large ribosomal subunit protein bL35 from Bacillus subtilis (strain 168).